Here is a 349-residue protein sequence, read N- to C-terminus: tRNA pseudouridine synthase D (349 aa).

F27 provides a ligand contact to substrate. The active-site Nucleophile is D80. N129 is a binding site for substrate. The TRUD domain occupies 155–303 (GVPNYFGAQR…VEAARRAMLL (149 aa)). F329 is a binding site for substrate.

Belongs to the pseudouridine synthase TruD family.

The enzyme catalyses uridine(13) in tRNA = pseudouridine(13) in tRNA. Its function is as follows. Responsible for synthesis of pseudouridine from uracil-13 in transfer RNAs. This chain is tRNA pseudouridine synthase D, found in Shigella sonnei (strain Ss046).